The following is a 1216-amino-acid chain: Tyrosine-protein kinase receptor ver-4 (1216 aa).

The Extracellular segment spans residues 1–789; that stretch reads MRVSLTEFLV…VKVAGASSSS (789 aa). N-linked (GlcNAc...) asparagine glycans are attached at residues Asn142, Asn195, Asn206, Asn245, Asn283, Asn333, Asn348, Asn384, Asn402, Asn412, Asn496, Asn508, Asn588, Asn599, Asn664, and Asn703. 2 consecutive Ig-like C2-type domains span residues 596–691 and 697–783; these read KSVN…TSIS and PPFL…VKVA. Cys619 and Cys675 form a disulfide bridge. The cysteines at positions 721 and 765 are disulfide-linked. A helical membrane pass occupies residues 790–810; that stretch reads FFWLFITFFAFVVVGIVVSLL. Residues 811 to 1216 lie on the Cytoplasmic side of the membrane; sequence WKLFGQKDLK…WVQKPTQLFF (406 aa). In terms of domain architecture, Protein kinase spans 870 to 1181; sequence LEILETLGSG…IKLFKNHIQY (312 aa). ATP contacts are provided by residues 876-884 and Lys908; that span reads LGSGQFGIV. Asp1042 acts as the Proton acceptor in catalysis.

The protein belongs to the protein kinase superfamily. Tyr protein kinase family.

It localises to the cell membrane. It carries out the reaction L-tyrosyl-[protein] + ATP = O-phospho-L-tyrosyl-[protein] + ADP + H(+). Its function is as follows. Receptor tyrosine kinase which may be involved, downstream of pvf-1, in the positioning of ray 1, the most anterior ray sensillum in the male tail. The polypeptide is Tyrosine-protein kinase receptor ver-4 (Caenorhabditis elegans).